Consider the following 274-residue polypeptide: Phloretin hydrolase (274 aa).

Zn(2+) is bound by residues histidine 123, glutamate 154, histidine 251, and glutamate 255.

The protein belongs to the DAPG/phloretin hydrolase family. In terms of assembly, homodimer. It depends on Zn(2+) as a cofactor.

The protein resides in the cytoplasm. It carries out the reaction phloretin + H2O = phloretate + 1,3,5-trihydroxybenzene + H(+). In terms of biological role, catalyzes the hydrolytic C-C cleavage of phloretin to phloroglucinol and 3-(4-hydroxyphenyl)propionic acid during flavonoid degradation. Also hydrolyzes other C-acylated phenols. The polypeptide is Phloretin hydrolase (phy) (Eubacterium ramulus).